A 208-amino-acid chain; its full sequence is Protein late bloomer (208 aa).

Transmembrane regions (helical) follow at residues 10 to 30 (IASIVLNAVLGFLAAGAIGWI), 41 to 61 (FVIAAYIACSLILVFALLGIF), 67 to 87 (SVVLTATSAVFLLILAILQIV), and 174 to 194 (FIIVSWVLVAFELICFALAVF).

It belongs to the tetraspanin (TM4SF) family. In terms of tissue distribution, transiently expressed on motor axons, growth cones and terminal arbors.

It localises to the membrane. The protein localises to the synapse. Its function is as follows. Facilitates synapse formation. This chain is Protein late bloomer (lbm), found in Drosophila melanogaster (Fruit fly).